Reading from the N-terminus, the 539-residue chain is Phosphoenolpyruvate carboxykinase (ATP) (539 aa).

Residues arginine 64, tyrosine 206, and lysine 212 each contribute to the substrate site. Residues lysine 212, histidine 231, and 247 to 255 (GLSGTGKTT) each bind ATP. Positions 212 and 231 each coordinate Mn(2+). Aspartate 268 provides a ligand contact to Mn(2+). Residues glutamate 296, arginine 332, 448–449 (RI), and threonine 454 contribute to the ATP site. Position 332 (arginine 332) interacts with substrate.

The protein belongs to the phosphoenolpyruvate carboxykinase (ATP) family. In terms of assembly, monomer. Requires Mn(2+) as cofactor.

The protein resides in the cytoplasm. It carries out the reaction oxaloacetate + ATP = phosphoenolpyruvate + ADP + CO2. It participates in carbohydrate biosynthesis; gluconeogenesis. Functionally, involved in the gluconeogenesis. Catalyzes the conversion of oxaloacetate (OAA) to phosphoenolpyruvate (PEP) through direct phosphoryl transfer between the nucleoside triphosphate and OAA. In Yersinia enterocolitica serotype O:8 / biotype 1B (strain NCTC 13174 / 8081), this protein is Phosphoenolpyruvate carboxykinase (ATP).